The chain runs to 325 residues: 4-hydroxy-3-methylbut-2-enyl diphosphate reductase (325 aa).

Cys-13 serves as a coordination point for [4Fe-4S] cluster. (2E)-4-hydroxy-3-methylbut-2-enyl diphosphate contacts are provided by His-42 and His-76. His-42 and His-76 together coordinate dimethylallyl diphosphate. Residues His-42 and His-76 each contribute to the isopentenyl diphosphate site. Cys-98 serves as a coordination point for [4Fe-4S] cluster. Residue His-126 coordinates (2E)-4-hydroxy-3-methylbut-2-enyl diphosphate. Position 126 (His-126) interacts with dimethylallyl diphosphate. His-126 is an isopentenyl diphosphate binding site. The active-site Proton donor is the Glu-128. Residue Thr-169 participates in (2E)-4-hydroxy-3-methylbut-2-enyl diphosphate binding. Cys-230 is a binding site for [4Fe-4S] cluster. The (2E)-4-hydroxy-3-methylbut-2-enyl diphosphate site is built by Ser-258, Ser-259, Asn-260, and Ser-306. Residues Ser-258, Ser-259, Asn-260, and Ser-306 each coordinate dimethylallyl diphosphate. Positions 258, 259, 260, and 306 each coordinate isopentenyl diphosphate.

The protein belongs to the IspH family. It depends on [4Fe-4S] cluster as a cofactor.

The catalysed reaction is isopentenyl diphosphate + 2 oxidized [2Fe-2S]-[ferredoxin] + H2O = (2E)-4-hydroxy-3-methylbut-2-enyl diphosphate + 2 reduced [2Fe-2S]-[ferredoxin] + 2 H(+). The enzyme catalyses dimethylallyl diphosphate + 2 oxidized [2Fe-2S]-[ferredoxin] + H2O = (2E)-4-hydroxy-3-methylbut-2-enyl diphosphate + 2 reduced [2Fe-2S]-[ferredoxin] + 2 H(+). The protein operates within isoprenoid biosynthesis; dimethylallyl diphosphate biosynthesis; dimethylallyl diphosphate from (2E)-4-hydroxy-3-methylbutenyl diphosphate: step 1/1. It participates in isoprenoid biosynthesis; isopentenyl diphosphate biosynthesis via DXP pathway; isopentenyl diphosphate from 1-deoxy-D-xylulose 5-phosphate: step 6/6. In terms of biological role, catalyzes the conversion of 1-hydroxy-2-methyl-2-(E)-butenyl 4-diphosphate (HMBPP) into a mixture of isopentenyl diphosphate (IPP) and dimethylallyl diphosphate (DMAPP). Acts in the terminal step of the DOXP/MEP pathway for isoprenoid precursor biosynthesis. This is 4-hydroxy-3-methylbut-2-enyl diphosphate reductase from Chlorobium phaeobacteroides (strain BS1).